A 114-amino-acid polypeptide reads, in one-letter code: Probable 4-amino-4-deoxy-L-arabinose-phosphoundecaprenol flippase subunit ArnE (114 aa).

Transmembrane regions (helical) follow at residues 38 to 58 (LTLR…LLWL), 64 to 84 (LPLS…TLAA), and 94 to 114 (LRHW…SWHL). The 70-residue stretch at 43–112 (LAIAVVSLGL…IMFGILLMSW (70 aa)) folds into the EamA domain.

It belongs to the ArnE family. As to quaternary structure, heterodimer of ArnE and ArnF.

The protein resides in the cell inner membrane. It participates in bacterial outer membrane biogenesis; lipopolysaccharide biosynthesis. In terms of biological role, translocates 4-amino-4-deoxy-L-arabinose-phosphoundecaprenol (alpha-L-Ara4N-phosphoundecaprenol) from the cytoplasmic to the periplasmic side of the inner membrane. The protein is Probable 4-amino-4-deoxy-L-arabinose-phosphoundecaprenol flippase subunit ArnE of Yersinia pseudotuberculosis serotype O:3 (strain YPIII).